We begin with the raw amino-acid sequence, 1391 residues long: Leucine-rich PPR motif-containing protein, mitochondrial (1391 aa).

A mitochondrion-targeting transit peptide spans 1–42; the sequence is MSALLAGARFLLRPGLRALPAPCVRLSPGQGRYLNNTPGHFA. 15 PPR repeats span residues 110-144, 145-179, 180-214, 215-249, 250-284, 389-425, 704-738, 741-775, 779-813, 815-850, 948-982, 1028-1062, 1063-1093, 1100-1134, and 1310-1344; these read LLRS…GAVF, DVSH…NVQP, NRVT…DLPI, TEAV…GIEP, GPET…EGSL, NLHS…GMPV, AIGT…DSSA, DTSK…DVPL, TTTS…GLAK, TSNL…NCMP, RDDM…NVIP, PESS…GTAM, SASA…AENH, NDAA…DKVP, and RETA…SVSP. The RNA-binding stretch occupies residues 1118–1387; that stretch reads KDALASLKAM…KLKKDKADSY (270 aa).

The protein resides in the mitochondrion. It is found in the nucleus. Its function is as follows. May play a role in RNA metabolism in both nuclei and mitochondria. May bind mature mRNA in the nucleus outer membrane. In mitochondria binds to poly(A) mRNA. May be involved in transcription regulation. Binds single-stranded DNA. This Xenopus tropicalis (Western clawed frog) protein is Leucine-rich PPR motif-containing protein, mitochondrial (lrpprc).